The chain runs to 364 residues: Dihydroorotate dehydrogenase (quinone) (364 aa).

FMN is bound by residues Ala-62–Lys-66 and Thr-86. Lys-66 serves as a coordination point for substrate. Asn-111 to Phe-115 is a binding site for substrate. Residues Asn-142 and Asn-175 each contribute to the FMN site. Asn-175 lines the substrate pocket. Ser-178 serves as the catalytic Nucleophile. Asn-180 is a substrate binding site. FMN-binding residues include Lys-216 and Thr-244. Asn-245–Thr-246 contributes to the substrate binding site. Residues Gly-267, Gly-296, and Tyr-317–Thr-318 contribute to the FMN site.

The protein belongs to the dihydroorotate dehydrogenase family. Type 2 subfamily. As to quaternary structure, monomer. The cofactor is FMN.

Its subcellular location is the cell membrane. The enzyme catalyses (S)-dihydroorotate + a quinone = orotate + a quinol. It participates in pyrimidine metabolism; UMP biosynthesis via de novo pathway; orotate from (S)-dihydroorotate (quinone route): step 1/1. Functionally, catalyzes the conversion of dihydroorotate to orotate with quinone as electron acceptor. The protein is Dihydroorotate dehydrogenase (quinone) of Anaeromyxobacter dehalogenans (strain 2CP-1 / ATCC BAA-258).